Consider the following 804-residue polypeptide: Probable replication endonuclease from prophage-like region 2 (804 aa).

Residues Tyr-503 and Tyr-507 each act as O-(5'-phospho-DNA)-tyrosine intermediate in the active site.

The protein belongs to the phage GPA family.

In terms of biological role, possible endonuclease which induces a single-strand cut and initiates DNA replication. This is Probable replication endonuclease from prophage-like region 2 from Salmonella typhi.